The sequence spans 309 residues: uncharacterized protein (309 aa).

The 47-residue stretch at 9 to 55 (NFLYNIANKDGFKGYKECRTSAYKNVFDDSSTKSTSKFHLGISDTKN) folds into the RPE1 insert domain. The chain crosses the membrane as a helical span at residues 62 to 82 (IIGLILIIFAGVLFYAYILQH).

Belongs to the LicD transferase family.

Its subcellular location is the membrane. This is an uncharacterized protein from Rickettsia typhi (strain ATCC VR-144 / Wilmington).